Here is a 143-residue protein sequence, read N- to C-terminus: uncharacterized protein (143 aa).

The interval 35-59 (ITKDRGDRDDGRYGEPRIQRKPGQL) is disordered. Positions 36–52 (TKDRGDRDDGRYGEPRI) are enriched in basic and acidic residues.

This is an uncharacterized protein from Streptomyces fradiae (Streptomyces roseoflavus).